Consider the following 118-residue polypeptide: Large ribosomal subunit protein bL19 (118 aa).

Belongs to the bacterial ribosomal protein bL19 family.

Functionally, this protein is located at the 30S-50S ribosomal subunit interface and may play a role in the structure and function of the aminoacyl-tRNA binding site. The polypeptide is Large ribosomal subunit protein bL19 (Salinispora tropica (strain ATCC BAA-916 / DSM 44818 / JCM 13857 / NBRC 105044 / CNB-440)).